The primary structure comprises 1072 residues: DNA-directed RNA polymerase subunit beta (1072 aa).

The protein belongs to the RNA polymerase beta chain family. In terms of assembly, in plastids the minimal PEP RNA polymerase catalytic core is composed of four subunits: alpha, beta, beta', and beta''. When a (nuclear-encoded) sigma factor is associated with the core the holoenzyme is formed, which can initiate transcription.

It localises to the plastid. The protein resides in the chloroplast. The enzyme catalyses RNA(n) + a ribonucleoside 5'-triphosphate = RNA(n+1) + diphosphate. Functionally, DNA-dependent RNA polymerase catalyzes the transcription of DNA into RNA using the four ribonucleoside triphosphates as substrates. This Amborella trichopoda protein is DNA-directed RNA polymerase subunit beta.